The sequence spans 337 residues: Riboflavin biosynthesis protein RibD (337 aa).

The interval 1–157 is deaminase; sequence MDSNPGADQA…IPWLKSVQLR (157 aa). One can recognise a CMP/dCMP-type deaminase domain in the interval 13–124; sequence PIVEQALRTA…DPNPSAGGGE (112 aa). Residue His63 coordinates Zn(2+). Catalysis depends on Glu65, which acts as the Proton donor. Residues Cys88 and Cys97 each contribute to the Zn(2+) site. A reductase region spans residues 158–337; it reads RPHVTLKFAQ…CPRAASGAGR (180 aa). NADP(+)-binding positions include Ala166 and 173–176; that span reads TAAA. Ser180 is a substrate binding site. Residue Trp182 coordinates NADP(+). Arg196 contacts substrate. NADP(+) is bound by residues Thr208 and Asp212. Residues Leu216, Arg219, and Glu279 each contribute to the substrate site. 281-287 contributes to the NADP(+) binding site; that stretch reads GAGLASG.

The protein in the N-terminal section; belongs to the cytidine and deoxycytidylate deaminase family. This sequence in the C-terminal section; belongs to the HTP reductase family. Zn(2+) is required as a cofactor.

The catalysed reaction is 2,5-diamino-6-hydroxy-4-(5-phosphoribosylamino)-pyrimidine + H2O + H(+) = 5-amino-6-(5-phospho-D-ribosylamino)uracil + NH4(+). It catalyses the reaction 5-amino-6-(5-phospho-D-ribitylamino)uracil + NADP(+) = 5-amino-6-(5-phospho-D-ribosylamino)uracil + NADPH + H(+). Its pathway is cofactor biosynthesis; riboflavin biosynthesis; 5-amino-6-(D-ribitylamino)uracil from GTP: step 2/4. It participates in cofactor biosynthesis; riboflavin biosynthesis; 5-amino-6-(D-ribitylamino)uracil from GTP: step 3/4. Converts 2,5-diamino-6-(ribosylamino)-4(3h)-pyrimidinone 5'-phosphate into 5-amino-6-(ribosylamino)-2,4(1h,3h)-pyrimidinedione 5'-phosphate. This is Riboflavin biosynthesis protein RibD (ribD) from Corynebacterium ammoniagenes (Brevibacterium ammoniagenes).